The chain runs to 88 residues: Homeobox protein knotted-1-like 1 (88 aa).

An ELK domain is found at 4-24; the sequence is ELKLELKQGFKSRIEDVREEI. Positions 25–88 form a DNA-binding region, homeobox; TALE-type; it reads LRKRRAGKLP…NQRKRNWHNN (64 aa).

Belongs to the TALE/KNOX homeobox family. Highly expressed in the roots.

It localises to the nucleus. In Zea mays (Maize), this protein is Homeobox protein knotted-1-like 1 (KNOX1).